The primary structure comprises 183 residues: A-type ATP synthase subunit E (183 aa).

This sequence belongs to the V-ATPase E subunit family. In terms of assembly, has multiple subunits, A(3), B(3), C, D, E, F, G, I and K(x); there may be a few other subunits as well.

Its subcellular location is the cell membrane. Its function is as follows. Component of the A-type ATP synthase that produces ATP from ADP in the presence of a proton gradient across the membrane. This is A-type ATP synthase subunit E from Methanosarcina mazei (strain ATCC BAA-159 / DSM 3647 / Goe1 / Go1 / JCM 11833 / OCM 88) (Methanosarcina frisia).